Here is a 250-residue protein sequence, read N- to C-terminus: Histone H1.3 (250 aa).

Disordered stretches follow at residues 17 to 53 (AASG…QMVD) and 104 to 250 (QTKG…ATKK). Positions 27-42 (KKAAATPKSKKSTAAP) are enriched in low complexity. Residues 44 to 118 (SHPPTQQMVD…GASGSFKLSR (75 aa)) enclose the H15 domain. Positions 120-133 (AKKDAKPKASAVEK) are enriched in basic and acidic residues. Residues 138 to 161 (VNASAAAATKRSSSTSTTKKAAGA) show a composition bias toward low complexity. Residues 174 to 191 (KNVEKKKADKEKAKDAKK) show a composition bias toward basic and acidic residues. Over residues 192–234 (TGTIKAKLTTAKAKSSATKPKTPKPKTTSAKPKKVVSATTPKK) the composition is skewed to low complexity. The segment covering 235–250 (TAVKKPKAKTASATKK) has biased composition (basic residues).

Belongs to the histone H1/H5 family.

The protein localises to the nucleus. It is found in the chromosome. Its function is as follows. Histones H1 are necessary for the condensation of nucleosome chains into higher-order structures. The chain is Histone H1.3 (His1.3) from Drosophila virilis (Fruit fly).